The following is a 251-amino-acid chain: Triosephosphate isomerase (251 aa).

9–11 (NWK) lines the substrate pocket. The active-site Electrophile is the His-95. The active-site Proton acceptor is Glu-167. Residues Gly-173, Ser-212, and 233-234 (GG) contribute to the substrate site.

This sequence belongs to the triosephosphate isomerase family. Homodimer.

The protein localises to the cytoplasm. It catalyses the reaction D-glyceraldehyde 3-phosphate = dihydroxyacetone phosphate. Its pathway is carbohydrate biosynthesis; gluconeogenesis. It participates in carbohydrate degradation; glycolysis; D-glyceraldehyde 3-phosphate from glycerone phosphate: step 1/1. Its function is as follows. Involved in the gluconeogenesis. Catalyzes stereospecifically the conversion of dihydroxyacetone phosphate (DHAP) to D-glyceraldehyde-3-phosphate (G3P). This chain is Triosephosphate isomerase, found in Pseudomonas aeruginosa (strain LESB58).